The primary structure comprises 142 residues: uncharacterized protein (142 aa).

This is an uncharacterized protein from Pseudomonas putida (Arthrobacter siderocapsulatus).